The primary structure comprises 345 residues: Uroporphyrinogen decarboxylase (345 aa).

Substrate is bound by residues 24–28 (RQAGR), Asp74, Tyr150, Ser205, and His318.

This sequence belongs to the uroporphyrinogen decarboxylase family. In terms of assembly, homodimer.

Its subcellular location is the cytoplasm. It catalyses the reaction uroporphyrinogen III + 4 H(+) = coproporphyrinogen III + 4 CO2. It participates in porphyrin-containing compound metabolism; protoporphyrin-IX biosynthesis; coproporphyrinogen-III from 5-aminolevulinate: step 4/4. Its function is as follows. Catalyzes the decarboxylation of four acetate groups of uroporphyrinogen-III to yield coproporphyrinogen-III. The polypeptide is Uroporphyrinogen decarboxylase (Dichelobacter nodosus (strain VCS1703A)).